The following is a 446-amino-acid chain: Phosphoglucosamine mutase (446 aa).

S103 serves as the catalytic Phosphoserine intermediate. Mg(2+) contacts are provided by S103, D242, D244, and D246. The residue at position 103 (S103) is a Phosphoserine.

The protein belongs to the phosphohexose mutase family. The cofactor is Mg(2+). Post-translationally, activated by phosphorylation.

It catalyses the reaction alpha-D-glucosamine 1-phosphate = D-glucosamine 6-phosphate. In terms of biological role, catalyzes the conversion of glucosamine-6-phosphate to glucosamine-1-phosphate. This is Phosphoglucosamine mutase from Vibrio vulnificus (strain CMCP6).